The chain runs to 307 residues: 2-dehydropantoate 2-reductase (307 aa).

Residues 7–12, Asn102, and Ala128 each bind NADP(+); that span reads GSGAMG. Residue Asn102 participates in substrate binding. Lys184 acts as the Proton donor in catalysis. Substrate contacts are provided by Asn188, Asn192, and Ser255. Glu268 contributes to the NADP(+) binding site.

It belongs to the ketopantoate reductase family.

It is found in the cytoplasm. It catalyses the reaction (R)-pantoate + NADP(+) = 2-dehydropantoate + NADPH + H(+). It participates in cofactor biosynthesis; (R)-pantothenate biosynthesis; (R)-pantoate from 3-methyl-2-oxobutanoate: step 2/2. Its function is as follows. Catalyzes the NADPH-dependent reduction of ketopantoate into pantoic acid. The polypeptide is 2-dehydropantoate 2-reductase (apbA) (Streptococcus pyogenes serotype M18 (strain MGAS8232)).